Reading from the N-terminus, the 475-residue chain is Ribulose bisphosphate carboxylase large chain (475 aa).

Positions 1–2 (MS) are excised as a propeptide. Pro-3 carries the N-acetylproline modification. Lys-14 is modified (N6,N6,N6-trimethyllysine). Residues Asn-123 and Thr-173 each contribute to the substrate site. Residue Lys-175 is the Proton acceptor of the active site. Lys-177 is a binding site for substrate. Mg(2+)-binding residues include Lys-201, Asp-203, and Glu-204. Lys-201 carries the N6-carboxylysine modification. The active-site Proton acceptor is the His-294. Substrate is bound by residues Arg-295, His-327, and Ser-379.

This sequence belongs to the RuBisCO large chain family. Type I subfamily. As to quaternary structure, heterohexadecamer of 8 large chains and 8 small chains; disulfide-linked. The disulfide link is formed within the large subunit homodimers. Mg(2+) serves as cofactor. Post-translationally, the disulfide bond which can form in the large chain dimeric partners within the hexadecamer appears to be associated with oxidative stress and protein turnover.

The protein resides in the plastid. It is found in the chloroplast. The enzyme catalyses 2 (2R)-3-phosphoglycerate + 2 H(+) = D-ribulose 1,5-bisphosphate + CO2 + H2O. It catalyses the reaction D-ribulose 1,5-bisphosphate + O2 = 2-phosphoglycolate + (2R)-3-phosphoglycerate + 2 H(+). In terms of biological role, ruBisCO catalyzes two reactions: the carboxylation of D-ribulose 1,5-bisphosphate, the primary event in carbon dioxide fixation, as well as the oxidative fragmentation of the pentose substrate in the photorespiration process. Both reactions occur simultaneously and in competition at the same active site. The polypeptide is Ribulose bisphosphate carboxylase large chain (Notothixos subaureus (Golden mistletoe)).